The sequence spans 194 residues: uncharacterized protein (194 aa).

This is an uncharacterized protein from Methanocaldococcus jannaschii (strain ATCC 43067 / DSM 2661 / JAL-1 / JCM 10045 / NBRC 100440) (Methanococcus jannaschii).